The chain runs to 303 residues: UDP-3-O-acyl-N-acetylglucosamine deacetylase (303 aa).

3 residues coordinate Zn(2+): His-78, His-237, and Asp-241. The active-site Proton donor is His-264.

This sequence belongs to the LpxC family. Zn(2+) is required as a cofactor.

It carries out the reaction a UDP-3-O-[(3R)-3-hydroxyacyl]-N-acetyl-alpha-D-glucosamine + H2O = a UDP-3-O-[(3R)-3-hydroxyacyl]-alpha-D-glucosamine + acetate. Its pathway is glycolipid biosynthesis; lipid IV(A) biosynthesis; lipid IV(A) from (3R)-3-hydroxytetradecanoyl-[acyl-carrier-protein] and UDP-N-acetyl-alpha-D-glucosamine: step 2/6. Functionally, catalyzes the hydrolysis of UDP-3-O-myristoyl-N-acetylglucosamine to form UDP-3-O-myristoylglucosamine and acetate, the committed step in lipid A biosynthesis. The polypeptide is UDP-3-O-acyl-N-acetylglucosamine deacetylase (Pseudomonas savastanoi pv. phaseolicola (strain 1448A / Race 6) (Pseudomonas syringae pv. phaseolicola (strain 1448A / Race 6))).